A 345-amino-acid polypeptide reads, in one-letter code: tRNA N6-adenosine threonylcarbamoyltransferase (345 aa).

H111 and H115 together coordinate Fe cation. Residues 136–140 (LVSGG), D169, G182, and N279 each bind substrate. Residue D307 coordinates Fe cation.

Belongs to the KAE1 / TsaD family. Fe(2+) is required as a cofactor.

It is found in the cytoplasm. The catalysed reaction is L-threonylcarbamoyladenylate + adenosine(37) in tRNA = N(6)-L-threonylcarbamoyladenosine(37) in tRNA + AMP + H(+). Its function is as follows. Required for the formation of a threonylcarbamoyl group on adenosine at position 37 (t(6)A37) in tRNAs that read codons beginning with adenine. Is involved in the transfer of the threonylcarbamoyl moiety of threonylcarbamoyl-AMP (TC-AMP) to the N6 group of A37, together with TsaE and TsaB. TsaD likely plays a direct catalytic role in this reaction. This chain is tRNA N6-adenosine threonylcarbamoyltransferase, found in Actinobacillus succinogenes (strain ATCC 55618 / DSM 22257 / CCUG 43843 / 130Z).